The primary structure comprises 282 residues: Probable endonuclease 4 (282 aa).

The Zn(2+) site is built by histidine 71, histidine 111, glutamate 147, aspartate 181, histidine 184, histidine 218, aspartate 231, histidine 233, and glutamate 263.

Belongs to the AP endonuclease 2 family. Zn(2+) serves as cofactor.

The catalysed reaction is Endonucleolytic cleavage to 5'-phosphooligonucleotide end-products.. Endonuclease IV plays a role in DNA repair. It cleaves phosphodiester bonds at apurinic or apyrimidinic (AP) sites, generating a 3'-hydroxyl group and a 5'-terminal sugar phosphate. The polypeptide is Probable endonuclease 4 (Protochlamydia amoebophila (strain UWE25)).